The sequence spans 577 residues: Methionine--tRNA ligase (577 aa).

The 'HIGH' region signature appears at 21 to 31; that stretch reads PYANGPLHVGH. Residues C153, C156, C166, and C169 each contribute to the Zn(2+) site. Positions 355-359 match the 'KMSKS' region motif; that stretch reads QMSTS. T358 is a binding site for ATP.

This sequence belongs to the class-I aminoacyl-tRNA synthetase family. MetG type 1 subfamily. As to quaternary structure, monomer. Zn(2+) serves as cofactor.

Its subcellular location is the cytoplasm. The catalysed reaction is tRNA(Met) + L-methionine + ATP = L-methionyl-tRNA(Met) + AMP + diphosphate. Is required not only for elongation of protein synthesis but also for the initiation of all mRNA translation through initiator tRNA(fMet) aminoacylation. This chain is Methionine--tRNA ligase, found in Rubrobacter xylanophilus (strain DSM 9941 / JCM 11954 / NBRC 16129 / PRD-1).